Consider the following 375-residue polypeptide: Delta(12) fatty acid dehydrogenase (375 aa).

2 helical membrane-spanning segments follow: residues 54-74 (IIAY…PAPL) and 77-97 (LAWP…WVIG). The short motif at 98 to 102 (HECGH) is the Histidine box-1 element. Residues 110–130 (WVDDTVGFILHSFLMTPYFSW) form a helical membrane-spanning segment. The short motif at 134 to 138 (HRNHH) is the Histidine box-2 element. The next 3 helical transmembrane spans lie at 172–192 (LLIM…TNIS), 218–238 (VLLS…AVAA), and 242–262 (AWVT…FDII). Residues 308 to 312 (HVMHH) carry the Histidine box-3 motif.

Belongs to the fatty acid desaturase type 1 family. Fe cation is required as a cofactor. In terms of tissue distribution, seed.

It is found in the membrane. It catalyses the reaction a (9Z,12Z)-octadecadienoyl-containing glycerolipid + 2 Fe(II)-[cytochrome b5] + O2 + 2 H(+) = a (9Z)-octadec-9-en-12-ynoyl-containing glycerolipid + 2 Fe(III)-[cytochrome b5] + 2 H2O. It participates in lipid metabolism; polyunsaturated fatty acid biosynthesis. Its function is as follows. Changes the delta-12 double bond of linoleic acid into a triple bond in the biosynthesis of crepenynic acid. The sequence is that of Delta(12) fatty acid dehydrogenase from Crepis alpina (Hawksbeard).